The sequence spans 1214 residues: Transient receptor potential cation channel subfamily M member 4 (1214 aa).

At 1–782 (MVVPEKEQSW…FHFWGAPVTI (782 aa)) the chain is on the cytoplasmic side. ATP contacts are provided by Arg171, Arg214, and Leu225. 4 residues coordinate Ca(2+): Asp270, Ala392, Asp395, and Glu396. Residues Arg421 and Gly448 each coordinate ATP. Residues 783–803 (FMGNVVSYLLFLLLFSRVLLV) traverse the membrane as a helical segment. At 804–814 (DFQPAPPGSLE) the chain is on the extracellular side. A helical membrane pass occupies residues 815–835 (LLLYFWAFTLLCEELRQGLSG). Ca(2+)-binding residues include Glu828 and Gln831. Residues 836–863 (GGGSLASGGPGPGHASLSQRLRLYLADS) lie on the Cytoplasmic side of the membrane. Residues 864–884 (WNQCDLVALTCFLLGVGCRLT) form a helical membrane-spanning segment. Asn865 and Asp868 together coordinate Ca(2+). At 885–886 (PG) the chain is on the extracellular side. The helical transmembrane segment at 887–910 (LYHLGRTVLCIDFMVFTVRLLHIF) threads the bilayer. Residues 911-930 (TVNKQLGPKIVIVSKMMKDV) are Cytoplasmic-facing. A helical membrane pass occupies residues 931–951 (FFFLFFLGVWLVAYGVATEGL). Residues 952–963 (LRPRDSDFPSIL) lie on the Extracellular side of the membrane. Positions 964 to 984 (RRVFYRPYLQIFGQIPQEDMD) form an intramembrane region, pore-forming. A Selectivity filter motif is present at residues 975 to 977 (FGQ). The Extracellular portion of the chain corresponds to 985–1019 (VALMEHSNCSSEPGFWAHPPGAQAGTCVSQYANWL). Asn992 carries N-linked (GlcNAc...) asparagine glycosylation. Cys993 and Cys1011 are joined by a disulfide. Residues 1020–1040 (VVLLLVIFLLVANILLVNLLI) form a helical membrane-spanning segment. At 1041 to 1214 (AMFSYTFGKV…PPPDLPGSKD (174 aa)) the chain is on the cytoplasmic side. The segment at 1076–1176 (APPFIVISHL…EYEQRLKVLE (101 aa)) is calmodulin-binding. Positions 1134–1187 (LARARDKRESDSERLKRTSQKVDLALKQLGHIREYEQRLKVLEREVQQCSRVLG) form a coiled coil. The mediates modulation by decavanadate and PIP2-binding stretch occupies residues 1136–1141 (RARDKR). Phosphoserine; by PKC is present on residues Ser1145 and Ser1152.

It belongs to the transient receptor (TC 1.A.4) family. LTrpC subfamily. TRPM4 sub-subfamily. In terms of assembly, homotetramer. In terms of processing, phosphorylation by PKC leads to increase the sensitivity to Ca(2+). Sumoylated. Desumoylated by SENP1. As to expression, widely expressed with a high expression in intestine and prostate. In brain, it is both expressed in whole cerebral arteries and isolated vascular smooth muscle cells. Prominently expressed in Purkinje fibers. Expressed at higher levels in T-helper 2 (Th2) cells as compared to T-helper 1 (Th1) cells. Expressed in keratocytes.

The protein resides in the cell membrane. Its subcellular location is the endoplasmic reticulum. The protein localises to the golgi apparatus. The enzyme catalyses Na(+)(in) = Na(+)(out). It catalyses the reaction K(+)(in) = K(+)(out). Its activity is regulated as follows. Displays weak voltage dependence, and repressed by decavanadate. Calmodulin-binding confers the Ca(2+) sensitivity. ATP is able to restore Ca(2+) sensitivity after desensitization. ATP inhibits channel activity. Phosphatidylinositol 4,5-bisphosphate (PIP2)-binding strongly enhances activity, by increasing the channel's Ca(2+) sensitivity and shifting its voltage dependence of activation towards negative potentials. Activity is also enhanced by 3,5-bis(trifluoromethyl)pyrazole derivative (BTP2). Exhibits pronounced temperature sensitivity, with activities strongly intensifying near physiological temperatures. Calcium-activated selective cation channel that mediates membrane depolarization. While it is activated by increase in intracellular Ca(2+), it is impermeable to it. Mediates transport of monovalent cations (Na(+) &gt; K(+) &gt; Cs(+) &gt; Li(+)), leading to depolarize the membrane. It thereby plays a central role in cadiomyocytes, neurons from entorhinal cortex, dorsal root and vomeronasal neurons, endocrine pancreas cells, kidney epithelial cells, cochlea hair cells etc. Participates in T-cell activation by modulating Ca(2+) oscillations after T lymphocyte activation, which is required for NFAT-dependent IL2 production. Involved in myogenic constriction of cerebral arteries. Controls insulin secretion in pancreatic beta-cells. May also be involved in pacemaking or could cause irregular electrical activity under conditions of Ca(2+) overload. Affects T-helper 1 (Th1) and T-helper 2 (Th2) cell motility and cytokine production through differential regulation of calcium signaling and NFATC1 localization. Enhances cell proliferation through up-regulation of the beta-catenin signaling pathway. Plays a role in keratinocyte differentiation. Functionally, lacks channel activity. This chain is Transient receptor potential cation channel subfamily M member 4, found in Homo sapiens (Human).